Consider the following 297-residue polypeptide: ATP synthase subunit gamma, mitochondrial (297 aa).

It belongs to the ATPase gamma chain family. In terms of assembly, F-type ATPases have 2 components, CF(1) - the catalytic core - and CF(0) - the membrane proton channel. CF(1) has five subunits: alpha(3), beta(3), gamma(1), delta(1), epsilon(1). CF(0) has three main subunits: a, b and c.

Its subcellular location is the mitochondrion. The protein localises to the mitochondrion inner membrane. Functionally, mitochondrial membrane ATP synthase (F(1)F(0) ATP synthase or Complex V) produces ATP from ADP in the presence of a proton gradient across the membrane which is generated by electron transport complexes of the respiratory chain. F-type ATPases consist of two structural domains, F(1) - containing the extramembraneous catalytic core, and F(0) - containing the membrane proton channel, linked together by a central stalk and a peripheral stalk. During catalysis, ATP synthesis in the catalytic domain of F(1) is coupled via a rotary mechanism of the central stalk subunits to proton translocation. Part of the complex F(1) domain and the central stalk which is part of the complex rotary element. The gamma subunit protrudes into the catalytic domain formed of alpha(3)beta(3). Rotation of the central stalk against the surrounding alpha(3)beta(3) subunits leads to hydrolysis of ATP in three separate catalytic sites on the beta subunits. This chain is ATP synthase subunit gamma, mitochondrial, found in Drosophila melanogaster (Fruit fly).